The primary structure comprises 1188 residues: Spermatogenesis-associated protein 31C1 (1188 aa).

Residues Pro23 to Leu43 traverse the membrane as a helical segment. 8 disordered regions span residues Pro57–Ser92, Leu121–Pro249, Pro483–Thr510, Thr530–Ser567, Met733–Pro813, Asn934–Ser1013, Gln1121–Leu1143, and Leu1155–His1188. Basic residues-rich tracts occupy residues Pro59–Ser68 and Arg80–Ser92. A compositionally biased stretch (basic and acidic residues) spans Val138–Met154. The segment covering Ser191–Arg207 has biased composition (low complexity). Over residues Pro210–Leu241 the composition is skewed to pro residues. Positions Trp495–Thr510 are enriched in polar residues. Composition is skewed to polar residues over residues Leu783–Ala800 and Pro943–Pro954. A compositionally biased stretch (basic and acidic residues) spans His960 to Met976. Over residues Gln1121 to Arg1130 the composition is skewed to polar residues.

The protein belongs to the SPATA31 family.

Its subcellular location is the membrane. Its function is as follows. May play a role in spermatogenesis. The sequence is that of Spermatogenesis-associated protein 31C1 (SPATA31C1) from Homo sapiens (Human).